Consider the following 291-residue polypeptide: tRNA dimethylallyltransferase (291 aa).

17–24 contacts ATP; sequence GPTASGKS. 19–24 contacts substrate; that stretch reads TASGKS.

It belongs to the IPP transferase family. As to quaternary structure, monomer. Mg(2+) is required as a cofactor.

It carries out the reaction adenosine(37) in tRNA + dimethylallyl diphosphate = N(6)-dimethylallyladenosine(37) in tRNA + diphosphate. In terms of biological role, catalyzes the transfer of a dimethylallyl group onto the adenine at position 37 in tRNAs that read codons beginning with uridine, leading to the formation of N6-(dimethylallyl)adenosine (i(6)A). In Cereibacter sphaeroides (strain ATCC 17025 / ATH 2.4.3) (Rhodobacter sphaeroides), this protein is tRNA dimethylallyltransferase.